The following is a 345-amino-acid chain: Fe-S cluster assembly protein DRE2 (345 aa).

The tract at residues 29–163 is N-terminal SAM-like domain; it reads GDSGDRTLLL…KPDYAEQEVV (135 aa). The segment at 164-237 is linker; that stretch reads PLRFGAKKVN…EDTLLTEADL (74 aa). 4 residues coordinate [2Fe-2S] cluster: C247, C258, C261, and C263. A fe-S binding site A region spans residues 247–263; sequence CAPQPGKKRRACKDCTC. [4Fe-4S] cluster-binding residues include C308, C311, C319, and C322. 2 consecutive short sequence motifs (cx2C motif) follow at residues 308–311 and 319–322; these read CNSC and CADC. The tract at residues 308–322 is fe-S binding site B; that stretch reads CNSCYLGDAFRCADC.

It belongs to the anamorsin family. As to quaternary structure, monomer. Interacts with TAH18. Interacts with MIA40. [2Fe-2S] cluster serves as cofactor. Requires [4Fe-4S] cluster as cofactor.

It is found in the cytoplasm. It localises to the mitochondrion intermembrane space. Component of the cytosolic iron-sulfur (Fe-S) protein assembly (CIA) machinery required for the maturation of extramitochondrial Fe-S proteins. Part of an electron transfer chain functioning in an early step of cytosolic Fe-S biogenesis, facilitating the de novo assembly of a [4Fe-4S] cluster on the scaffold complex CFD1-NBP35. Electrons are transferred to DRE2 from NADPH via the FAD- and FMN-containing protein TAH18. TAH18-DRE2 are also required for the assembly of the diferric tyrosyl radical cofactor of ribonucleotide reductase (RNR), probably by providing electrons for reduction during radical cofactor maturation in the catalytic small subunit RNR2. In Podospora anserina (strain S / ATCC MYA-4624 / DSM 980 / FGSC 10383) (Pleurage anserina), this protein is Fe-S cluster assembly protein DRE2.